The following is a 151-amino-acid chain: Trivalent organoarsenical cleaving enzyme (151 aa).

Residues serine 2–valine 118 form the VOC domain. Residue glutamine 5 participates in Fe(2+) binding. Aspartate 61 is a roxarsone (III) binding site. Residue histidine 62 participates in Fe(2+) binding. The roxarsone (III) site is built by cysteine 95 and cysteine 96. Residue glutamate 114 coordinates Fe(2+).

In terms of assembly, monomer. Requires Fe(2+) as cofactor.

It catalyses the reaction methylarsonous acid + AH2 + O2 = arsenite + methanol + A + H(+). The catalysed reaction is roxarsone (III) + AH2 + O2 = 4-hydroxy-3-nitrocyclohexa-2,5-dien-1-one + arsenite + A + H(+). The enzyme catalyses nitarsone (III) + AH2 + O2 = 4-nitrocyclohexa-2,5-dien-1-one + arsenite + A + H(+). It carries out the reaction 4-aminophenylarsonous acid + AH2 + O2 = 4-aminocyclohexa-2,5-dien-1-one + arsenite + A. Its function is as follows. Nonheme iron-dependent dioxygenase that can break carbon-arsenic bonds, playing a role in the detoxification of environmental organoarsenical compounds. Catalyzes the oxygen-dependent demethylation of highly toxic methylarsonous acid (MAs(III)) to arsenite, which can then be exported out of the cell. Can also cleave the C-As bond in several trivalent aromatic arsenicals, including roxarsone (III), nitarsone (III) and (4-aminophenyl)arsonous acid. Organoarsenical degradation by this enzyme is proposed to have a significant impact on the arsenic biogeocycle that maintains a balance between organic and inorganic species. The sequence is that of Trivalent organoarsenical cleaving enzyme from Thermomonospora curvata (strain ATCC 19995 / DSM 43183 / JCM 3096 / KCTC 9072 / NBRC 15933 / NCIMB 10081 / Henssen B9).